Reading from the N-terminus, the 1925-residue chain is MEDASKQLRVLDAQERAKAAFQLDFIASVETLEDAQEKYEGMMFRSGTKLPSTHIKLAIDLRVAEKDLRRHVKNVPTVLEIGPSVESVRYAVQTRDKERVHGCTFSDARDNLRHNKIGYEAHYDRKIGPDAALLAAGIPTDTFCVDGFSNCEYQSPLAIACHSLYPDGESNSIMDVAKGMALHGTHVIYAWMHLPVELLTLTDADNIFEGYSIRFEETGALPCTKRRKAIFSGYNDFGSAYVHDAHHWAGWLKHRGVDTPYGFSILIDIQQRFGMHTKLKITRGHSSGSITTVFPLSKLGLIWVPNIVKIMYPKAKHEPEYIVTDKKKYEGVCVYVGTRVQSSGKSITLAEIVQYIRTRLTRIILNGTVHEKTWTIAEQDIERLAVSIMFRKNVERAVSEKALMRAQKKCKSAEKQALLPVWMRRIANWFQDKFQIDEEVVRKRYLECLKAQPWIHADKVVNCETKRYNPTVAEVGPKNHLLATTGLRELQREIPSANEPQDRGAKAWHSAHADLDIYAEGLRLDSAKEAAAGKQSLAITLQQAFQVLGKTKCEGCNNIEIEYWTGPPGSGKSRAAKPRFADLQGGVLYCAPTRTLRDALDESVVHPSRVCTYHNALHVAAKESGNRPFDVIVIDEAETTPACYVGTMHHASPSSRIVCLGDPHQIGYIDFSDRKDDLKPFSIIAAECRTRRFNTTYRCPQDVLNLPIFKTLYPDAISFSKQLTSIRYLTRARSVTRTRHAQTLTQDQKPHSEPPVTAHEPQARRTDVIVHYAGTLPERALLEKVRHINVALTRHTNALYIRDESEKGELVPSLMTPPSWSTYRCTPVDKQMVPDPVAVERENGSSGPCDSHHIGAITILQELGKLTDTKGVRVFESEAVPTAHRRVVLDGNLDSGPDRYPMYQFTNLRGTKYTNIKDNQQALHTLVGRYARKINSSSREDAEFDVKRITARLKEWIPFRTAEPEQVDSCFADAMQKIAERGHGVDDIEDFWSNEGQRISYHLKGQQKVMDPTKLKLGQGISAHEKCANIALSAWVRIIQDQMSTSEKFIFANGQSDRDTMSIIEARLQEKAREFKSIDIKEFDTVHNWVSILVFSWRCDRGCPEHLIEYFEKRSKSRTLSSRIGSVDVSFMLDSGAVWTIARNTLFASGLMLALFVGVDFIAAKGDDVFLAGNNLYLDAERLRMGSYLAANNLKIEKTAVVSFIGFIVSQAAVTADVVRLATRTYGRSYKNADDLAKYKIAIADHCKLFRSPRTRLMTAINCATLYGTSKECINYLMDALDAFGHTKMSDLHLDPGFVMRVTPMKVDERVYSGQDGCQRADKTREKQPEPGQPGPQQQQQASTQEAGSKTSPRSRTDYQPRPDGRTREPREHPGQPRSDTREGVKASDDGESHGSDIRGMDSRLSRPGRRIQDEPGRRENSRRRDTSVNMRSISRDRGRQIPGTEFYDATAGWRDLASTSDASPVLQASVVVHHHHQQHGSRSDERRSGCVRERLEQQDGLDRSDVPKLGASRERVLHGRPDRSADGRTTPDSTGCIRVTRELPSDIERRHSVLQRTHSRESGSGGDRAVPTGQRTPEGEPGHSSRDHPNGRNVTARRFRAELHIDDDDRGPGRVRGRSNPATHGVDGADAGVGAAGVPDCEPDIRRRKHNHHHDHAATRVGDGNVAIHSQQRDGHRDRGRGSATVRVRSEFGRLGTESAGHQLNQDSTNEHEPNDAGNAQDHSVPTQRNEGLLYAPEGVPTRVRNDNGDVLWTGAMEDTEDNCGRLPPGNWWTPGYHRQQLRDRRCRDDRYVYINRTLLQGVPTLRSDTGGGEPLGPLRQCDTSEGRRGANSGSNLDRSAPIRIPGTIQRIRGPIRDGGQDHSPDTSLCAISSRSGECGDGLHRERDRECSLEFHLGEAATKSETCWRNRSRSPQSCGPHREP.

Positions 45-252 (RSGTKLPSTH…HDAHHWAGWL (208 aa)) constitute an Alphavirus-like MT domain. The (+)RNA virus helicase ATP-binding domain occupies 533–693 (GKQSLAITLQ…IAAECRTRRF (161 aa)). One can recognise a (+)RNA virus helicase C-terminal domain in the interval 694–834 (NTTYRCPQDV…CTPVDKQMVP (141 aa)). Disordered regions lie at residues 737–760 (RTRH…TAHE), 1310–1445 (RVYS…IPGT), 1468–1636 (QASV…GVGA), 1666–1727 (NVAI…HSVP), 1806–1847 (TLRS…IRIP), and 1905–1925 (SETC…HREP). Positions 1319–1329 (QRADKTREKQP) are enriched in basic and acidic residues. The span at 1342–1354 (ASTQEAGSKTSPR) shows a compositional bias: polar residues. Basic and acidic residues-rich tracts occupy residues 1355 to 1427 (SRTD…RRDT), 1482 to 1527 (SRSD…RSAD), 1540 to 1552 (VTRE…ERRH), and 1578 to 1591 (PEGE…DHPN). Residues 1626-1636 (GVDGADAGVGA) show a composition bias toward low complexity. A compositionally biased stretch (basic and acidic residues) spans 1672–1682 (QQRDGHRDRGR). The span at 1905-1918 (SETCWRNRSRSPQS) shows a compositional bias: polar residues.

The protein belongs to the ssRNA positive-strand viruses RNA-directed RNA polymerase family.

It carries out the reaction RNA(n) + a ribonucleoside 5'-triphosphate = RNA(n+1) + diphosphate. The catalysed reaction is ATP + H2O = ADP + phosphate + H(+). Functionally, RNA-dependent RNA polymerase replicates the viral genome. The polypeptide is Methyltransferase/helicase/RNA-directed RNA polymerase (Nudaurelia capensis beta virus (isolate Pine emperor moth/South Africa) (NbetaV)).